The primary structure comprises 250 residues: Pyrroloquinoline-quinone synthase (250 aa).

This sequence belongs to the PqqC family.

It catalyses the reaction 6-(2-amino-2-carboxyethyl)-7,8-dioxo-1,2,3,4,7,8-hexahydroquinoline-2,4-dicarboxylate + 3 O2 = pyrroloquinoline quinone + 2 H2O2 + 2 H2O + H(+). The protein operates within cofactor biosynthesis; pyrroloquinoline quinone biosynthesis. Ring cyclization and eight-electron oxidation of 3a-(2-amino-2-carboxyethyl)-4,5-dioxo-4,5,6,7,8,9-hexahydroquinoline-7,9-dicarboxylic-acid to PQQ. The polypeptide is Pyrroloquinoline-quinone synthase (Xanthomonas oryzae pv. oryzae (strain PXO99A)).